The primary structure comprises 520 residues: BBSome complex member BBS4 (520 aa).

The interval 1 to 26 is disordered; it reads MAEVKLGMKTQVPASVESQKPRSKKA. The segment at 1-66 is required for localization to centrosomes; that stretch reads MAEVKLGMKT…EQLQETQGLC (66 aa). 10 TPR repeats span residues 67–100, 102–134, 135–167, 168–201, 203–235, 237–269, 270–303, 304–337, 339–371, and 373–408; these read EYAIYVQALIFRLEGNIQESLELFQTCAVLSPQC, DNLKQVARSLFLLGKHKAATEVYNEAAKLNQKD, WEICHNLGVCYTYLKQFNKAQDQLHSALQLNKH, DLTYIMLGKIHLLQGDLDKAIEIYKKAVEFSPEN, ELLTTLGLLYLQLGVYQKAFEHLGNALTYDPAN, KAILAAGSMMQTHGDFDVALTKYRVVACAIPES, PPLWNNIGMCFFGKKKYVAAISCLKRANYLAPFD, WKILYNLGLVHLTMQQYASAFHFLSAAINFQPKM, ELYMLLAVALTNLEDIENARRAYVEAVRLDKCN, and LVNLNYAVLLYNQGEKKSALAQYQEMEKKVNFLKDN. The segment at 101 to 337 is interaction with PCM1; the sequence is ADNLKQVARS…SAAINFQPKM (237 aa). A required for localization to centrosomes region spans residues 338–520; the sequence is GELYMLLAVA…TEASEQKKEK (183 aa). The disordered stretch occupies residues 488-520; that stretch reads AQLPKPPSLPLEPEPEPTVEASPTEASEQKKEK.

This sequence belongs to the BBS4 family. In terms of assembly, part of BBSome complex, that contains BBS1, BBS2, BBS4, BBS5, BBS7, BBS8/TTC8, BBS9 and BBIP10. Interacts with PCM1 and DCTN1. Interacts with DC28B. Interacts with ALDOB and C2CD3. Interacts with PKD1. Interacts with CEP290. Interacts with DLEC1. Expressed in the hippocampus and dentate gyrus, the columnar epithelial cells of bronchioles, the olfactory epithelium and the inner segment and outer nuclear layer of the retina. Expressed in testis.

The protein resides in the cytoplasm. The protein localises to the cytoskeleton. It localises to the microtubule organizing center. Its subcellular location is the centrosome. It is found in the cell projection. The protein resides in the cilium membrane. The protein localises to the centriolar satellite. It localises to the cilium. Its subcellular location is the flagellum. Its function is as follows. The BBSome complex is thought to function as a coat complex required for sorting of specific membrane proteins to the primary cilia. The BBSome complex is required for ciliogenesis but is dispensable for centriolar satellite function. This ciliogenic function is mediated in part by the Rab8 GDP/GTP exchange factor, which localizes to the basal body and contacts the BBSome. Rab8(GTP) enters the primary cilium and promotes extension of the ciliary membrane. Firstly the BBSome associates with the ciliary membrane and binds to RAB3IP/Rabin8, the guanosyl exchange factor (GEF) for Rab8 and then the Rab8-GTP localizes to the cilium and promotes docking and fusion of carrier vesicles to the base of the ciliary membrane. The BBSome complex, together with the LTZL1, controls SMO ciliary trafficking and contributes to the sonic hedgehog (SHH) pathway regulation. Required for proper BBSome complex assembly and its ciliary localization. Required for microtubule anchoring at the centrosome but not for microtubule nucleation. May be required for the dynein-mediated transport of pericentriolar proteins to the centrosome. This Mus musculus (Mouse) protein is BBSome complex member BBS4 (Bbs4).